Consider the following 148-residue polypeptide: 3-dehydroquinate dehydratase (148 aa).

Catalysis depends on Tyr24, which acts as the Proton acceptor. Substrate-binding residues include Asn80, His86, and Asp93. The active-site Proton donor is the His106. Substrate-binding positions include 107-108 (IS) and Arg117.

It belongs to the type-II 3-dehydroquinase family. Homododecamer.

It catalyses the reaction 3-dehydroquinate = 3-dehydroshikimate + H2O. Its pathway is metabolic intermediate biosynthesis; chorismate biosynthesis; chorismate from D-erythrose 4-phosphate and phosphoenolpyruvate: step 3/7. In terms of biological role, catalyzes a trans-dehydration via an enolate intermediate. The chain is 3-dehydroquinate dehydratase from Acidovorax sp. (strain JS42).